The sequence spans 422 residues: Synaptotagmin-1 (422 aa).

At 1 to 57 the chain is on the vesicular side; sequence MVSESHHEALAAPPVTTVATVLPSNATEPASPGEGKEDAFSKLKEKFMNELHKIPLP. N-linked (GlcNAc...) asparagine glycosylation is present at Asn-25. Residues 58 to 80 traverse the membrane as a helical segment; the sequence is PWALIAIAIVAVLLVLTCCFCIC. 5 S-palmitoyl cysteine lipidation sites follow: Cys-75, Cys-76, Cys-78, Cys-80, and Cys-83. Over 81–422 the chain is Cytoplasmic; the sequence is KKCLFKKKNK…EVDAMLAVKK (342 aa). Residues 113–142 are disordered; that stretch reads TMKDQALKDDDAETGLTDGEEKEEPKEEEK. Residues 122-134 are compositionally biased toward acidic residues; it reads DDAETGLTDGEEK. Thr-129 carries the post-translational modification Phosphothreonine. The tract at residues 136–382 is phospholipid binding; that stretch reads EPKEEEKLGK…AIGKVFVGYN (247 aa). In terms of domain architecture, C2 1 spans 142–261; that stretch reads KLGKLQYSLD…DFGHVTEEWR (120 aa). 3 residues coordinate Ca(2+): Leu-172, Asp-173, and Asp-179. Tyr-230 is subject to Phosphotyrosine. Positions 231, 232, 233, 236, 237, and 239 each coordinate Ca(2+). The residue at position 265 (Ser-265) is a Phosphoserine. The 134-residue stretch at 273-406 folds into the C2 2 domain; the sequence is KLGDICFSLR…NPRRPIAQWH (134 aa). The Ca(2+) site is built by Asp-304 and Asp-310. 2 positions are modified to phosphoserine: Ser-343 and Ser-345. Ca(2+) contacts are provided by Asp-364, Asp-366, and Asp-372.

Belongs to the synaptotagmin family. In terms of assembly, homotetramer. Heterodimer; heterodimerizes with SYT2 in presence of calcium. Interacts with SCAMP5. Interacts with STON2. Forms a complex with SV2B, syntaxin 1 and SNAP25. Interacts with SV2A, SV2B and SV2C. Interacts with RIMS1. Interacts with PRRT2. Interacts with DNAJC5 in a phosphorylation-dependent manner. Interacts (via N-terminus) with RAB3A. Interacts with SYT12. Interacts with calmodulin. Interacts with DNM1 (via C-terminal proline-rich domain (PRD)); this interaction facilitates vesicle fission during clathrin-mediated endocytosis (CME). Ca(2+) serves as cofactor. Glycosylated. As to expression, expressed in melanocytes.

It localises to the cytoplasmic vesicle. The protein resides in the secretory vesicle membrane. It is found in the secretory vesicle. The protein localises to the synaptic vesicle membrane. Its subcellular location is the chromaffin granule membrane. It localises to the cytoplasm. Functionally, calcium sensor that participates in triggering neurotransmitter release at the synapse. May have a regulatory role in the membrane interactions during trafficking of synaptic vesicles at the active zone of the synapse. It binds acidic phospholipids with a specificity that requires the presence of both an acidic head group and a diacyl backbone. A Ca(2+)-dependent interaction between synaptotagmin and putative receptors for activated protein kinase C has also been reported. It can bind to at least three additional proteins in a Ca(2+)-independent manner; these are neurexins, syntaxin and AP2. Plays a role in dendrite formation by melanocytes. This Homo sapiens (Human) protein is Synaptotagmin-1.